We begin with the raw amino-acid sequence, 190 residues long: Ribonuclease HII (190 aa).

One can recognise an RNase H type-2 domain in the interval 1–190 (MAGVDEVGRG…FCRKIIENPD (190 aa)). A divalent metal cation contacts are provided by Asp5, Glu6, and Asp101.

It belongs to the RNase HII family. Mn(2+) is required as a cofactor. Mg(2+) serves as cofactor.

The protein localises to the cytoplasm. The enzyme catalyses Endonucleolytic cleavage to 5'-phosphomonoester.. Its function is as follows. Endonuclease that specifically degrades the RNA of RNA-DNA hybrids. This is Ribonuclease HII (rnhB) from Synechocystis sp. (strain ATCC 27184 / PCC 6803 / Kazusa).